Reading from the N-terminus, the 192-residue chain is 4'-phosphopantetheinyl transferase AcpT (192 aa).

The protein belongs to the P-Pant transferase superfamily. Gsp/Sfp/HetI/AcpT family.

The catalysed reaction is apo-[ACP] + CoA = holo-[ACP] + adenosine 3',5'-bisphosphate + H(+). Functionally, may be involved in an alternative pathway for phosphopantetheinyl transfer and holo-ACP synthesis. The native apo-protein substrate is unknown. The protein is 4'-phosphopantetheinyl transferase AcpT (acpT) of Salmonella typhimurium (strain LT2 / SGSC1412 / ATCC 700720).